The primary structure comprises 447 residues: Phosphoglucosamine mutase (447 aa).

Residue serine 104 is the Phosphoserine intermediate of the active site. Residues serine 104, aspartate 243, aspartate 245, and aspartate 247 each coordinate Mg(2+). Phosphoserine is present on serine 104.

It belongs to the phosphohexose mutase family. Mg(2+) is required as a cofactor. Activated by phosphorylation.

It catalyses the reaction alpha-D-glucosamine 1-phosphate = D-glucosamine 6-phosphate. Its function is as follows. Catalyzes the conversion of glucosamine-6-phosphate to glucosamine-1-phosphate. In Corynebacterium aurimucosum (strain ATCC 700975 / DSM 44827 / CIP 107346 / CN-1) (Corynebacterium nigricans), this protein is Phosphoglucosamine mutase.